The chain runs to 443 residues: Glutamate--tRNA ligase 1 (443 aa).

The short motif at 10–20 is the 'HIGH' region element; sequence PSPTGYIHVGN. The 'KMSKS' region signature appears at 241 to 245; that stretch reads ALSKR. Lys244 contributes to the ATP binding site.

Belongs to the class-I aminoacyl-tRNA synthetase family. Glutamate--tRNA ligase type 1 subfamily. As to quaternary structure, monomer.

It localises to the cytoplasm. It catalyses the reaction tRNA(Glu) + L-glutamate + ATP = L-glutamyl-tRNA(Glu) + AMP + diphosphate. Its function is as follows. Catalyzes the attachment of glutamate to tRNA(Glu) in a two-step reaction: glutamate is first activated by ATP to form Glu-AMP and then transferred to the acceptor end of tRNA(Glu). This is Glutamate--tRNA ligase 1 from Ruegeria pomeroyi (strain ATCC 700808 / DSM 15171 / DSS-3) (Silicibacter pomeroyi).